A 364-amino-acid chain; its full sequence is Uroporphyrinogen decarboxylase (364 aa).

Substrate is bound by residues 28–32 (RQAGR), Asp78, Tyr160, Thr215, and His333.

It belongs to the uroporphyrinogen decarboxylase family. Homodimer.

The protein resides in the cytoplasm. The enzyme catalyses uroporphyrinogen III + 4 H(+) = coproporphyrinogen III + 4 CO2. It functions in the pathway porphyrin-containing compound metabolism; protoporphyrin-IX biosynthesis; coproporphyrinogen-III from 5-aminolevulinate: step 4/4. Catalyzes the decarboxylation of four acetate groups of uroporphyrinogen-III to yield coproporphyrinogen-III. The polypeptide is Uroporphyrinogen decarboxylase (Burkholderia pseudomallei (strain 1106a)).